The sequence spans 256 residues: Probable hydroxyacylglutathione hydrolase glo2 (256 aa).

Histidine 63, histidine 65, aspartate 67, histidine 68, histidine 118, and aspartate 139 together coordinate Zn(2+). Residues arginine 148, 178 to 180 (HEY), and 250 to 253 (RDMK) contribute to the substrate site. Histidine 178 contributes to the Zn(2+) binding site.

Belongs to the metallo-beta-lactamase superfamily. Glyoxalase II family. It depends on Zn(2+) as a cofactor.

The protein resides in the cytoplasm. It localises to the nucleus. The catalysed reaction is an S-(2-hydroxyacyl)glutathione + H2O = a 2-hydroxy carboxylate + glutathione + H(+). The enzyme catalyses (R)-S-lactoylglutathione + H2O = (R)-lactate + glutathione + H(+). It functions in the pathway secondary metabolite metabolism; methylglyoxal degradation; (R)-lactate from methylglyoxal: step 2/2. In terms of biological role, thiolesterase that catalyzes the hydrolysis of S-D-lactoylglutathione to form glutathione and D-lactic acid. Involved in the metabolism of methylglyoxal, a toxic compound for yeast proliferation, by converting methylglyoxal to lactate via S-D-lactoylglutathione by sequential enzyme reactions catalyzed by glyoxalase I and glyoxalase II. In Schizosaccharomyces pombe (strain 972 / ATCC 24843) (Fission yeast), this protein is Probable hydroxyacylglutathione hydrolase glo2 (glo2).